Consider the following 442-residue polypeptide: tRNA modification GTPase MnmE (442 aa).

3 residues coordinate (6S)-5-formyl-5,6,7,8-tetrahydrofolate: arginine 24, glutamate 82, and lysine 122. One can recognise a TrmE-type G domain in the interval 219-366 (GFKVALVGEP…LRRALKREIE (148 aa)). Asparagine 229 contributes to the K(+) binding site. Residues 229–234 (NAGKST), 248–254 (TDIAGTT), and 273–276 (DTAG) each bind GTP. Serine 233 is a Mg(2+) binding site. K(+)-binding residues include threonine 248, isoleucine 250, and threonine 253. Threonine 254 is a Mg(2+) binding site. Lysine 442 provides a ligand contact to (6S)-5-formyl-5,6,7,8-tetrahydrofolate.

The protein belongs to the TRAFAC class TrmE-Era-EngA-EngB-Septin-like GTPase superfamily. TrmE GTPase family. Homodimer. Heterotetramer of two MnmE and two MnmG subunits. The cofactor is K(+).

The protein resides in the cytoplasm. Exhibits a very high intrinsic GTPase hydrolysis rate. Involved in the addition of a carboxymethylaminomethyl (cmnm) group at the wobble position (U34) of certain tRNAs, forming tRNA-cmnm(5)s(2)U34. This chain is tRNA modification GTPase MnmE, found in Agrobacterium fabrum (strain C58 / ATCC 33970) (Agrobacterium tumefaciens (strain C58)).